Consider the following 172-residue polypeptide: NADH-ubiquinone oxidoreductase chain 6 (172 aa).

The next 5 membrane-spanning stretches (helical) occupy residues 1 to 21, 27 to 47, 48 to 68, 87 to 107, and 138 to 158; these read MTYFVLFLGLCFVLGGLAVAS, YGVVGLVLASVAGCGWLLSLG, ISFVSLVLFMVYLGGMLVVFV, VVGYGMGFVAVLVAGVVVGGF, and CGVGMFLAAGWGLLLTLFVVL.

Belongs to the complex I subunit 6 family.

The protein resides in the mitochondrion membrane. The enzyme catalyses a ubiquinone + NADH + 5 H(+)(in) = a ubiquinol + NAD(+) + 4 H(+)(out). Functionally, core subunit of the mitochondrial membrane respiratory chain NADH dehydrogenase (Complex I) that is believed to belong to the minimal assembly required for catalysis. Complex I functions in the transfer of electrons from NADH to the respiratory chain. The immediate electron acceptor for the enzyme is believed to be ubiquinone. The sequence is that of NADH-ubiquinone oxidoreductase chain 6 (MT-ND6) from Uria aalge (Common mure).